A 337-amino-acid polypeptide reads, in one-letter code: Transaldolase (337 aa).

Lys115 carries the post-translational modification N6-acetyllysine. Residue Lys142 is the Schiff-base intermediate with substrate of the active site. Lys219 carries the post-translational modification N6-acetyllysine. Phosphoserine is present on residues Ser237 and Ser256. An N6-acetyllysine mark is found at Lys269, Lys286, and Lys321.

The protein belongs to the transaldolase family. Type 1 subfamily. In terms of assembly, homodimer.

It is found in the cytoplasm. The catalysed reaction is D-sedoheptulose 7-phosphate + D-glyceraldehyde 3-phosphate = D-erythrose 4-phosphate + beta-D-fructose 6-phosphate. It participates in carbohydrate degradation; pentose phosphate pathway; D-glyceraldehyde 3-phosphate and beta-D-fructose 6-phosphate from D-ribose 5-phosphate and D-xylulose 5-phosphate (non-oxidative stage): step 2/3. Functionally, transaldolase is important for the balance of metabolites in the pentose-phosphate pathway. The polypeptide is Transaldolase (TALDO1) (Bos taurus (Bovine)).